The following is a 367-amino-acid chain: MTLSSLGWDDFFAGAFQPFASENFLPARVALEHKHACVLLSARGEITATCTGRLLHETATRAALPAVGDWVAVRLRPESLASGAGVALVGDIHAVLPRRTAFTRRAVGDADAEQVLATNVDTVFLVTGLDRDFNLRRIERYLAVARASEAQPVVVLNKSDLHPDARGAEAEVRRITRTAPVVTLSAARGDGIAALAPWLVPGATVALLGSSGAGKSTLINRLLGKQRQDTGPLSHAMNKGRHTTTHRELLALPGGALVIDTPGLRELQLWGVDESAVAETFPEVAALAAECRFPDCTHQREPGCAVRAALDDGTLDPTRWASYEKLQREQAYAARRVDPVLARAERDRWKKIYQGQRARERIEGRWE.

One can recognise a CP-type G domain in the interval 112–267 (AEQVLATNVD…VIDTPGLREL (156 aa)). GTP contacts are provided by residues 157–160 (NKSD) and 209–217 (GSSGAGKST). Zn(2+)-binding residues include cysteine 291, cysteine 296, histidine 298, and cysteine 304.

Belongs to the TRAFAC class YlqF/YawG GTPase family. RsgA subfamily. As to quaternary structure, monomer. Associates with 30S ribosomal subunit, binds 16S rRNA. It depends on Zn(2+) as a cofactor.

The protein resides in the cytoplasm. Its function is as follows. One of several proteins that assist in the late maturation steps of the functional core of the 30S ribosomal subunit. Helps release RbfA from mature subunits. May play a role in the assembly of ribosomal proteins into the subunit. Circularly permuted GTPase that catalyzes slow GTP hydrolysis, GTPase activity is stimulated by the 30S ribosomal subunit. This chain is Small ribosomal subunit biogenesis GTPase RsgA, found in Opitutus terrae (strain DSM 11246 / JCM 15787 / PB90-1).